A 70-amino-acid chain; its full sequence is ATP synthase subunit c (70 aa).

Transmembrane regions (helical) follow at residues 5-25 (AAGI…AIIV) and 47-67 (FIGV…SFIL).

This sequence belongs to the ATPase C chain family. In terms of assembly, F-type ATPases have 2 components, F(1) - the catalytic core - and F(0) - the membrane proton channel. F(1) has five subunits: alpha(3), beta(3), gamma(1), delta(1), epsilon(1). F(0) has three main subunits: a(1), b(2) and c(10-14). The alpha and beta chains form an alternating ring which encloses part of the gamma chain. F(1) is attached to F(0) by a central stalk formed by the gamma and epsilon chains, while a peripheral stalk is formed by the delta and b chains.

It localises to the cell membrane. In terms of biological role, f(1)F(0) ATP synthase produces ATP from ADP in the presence of a proton or sodium gradient. F-type ATPases consist of two structural domains, F(1) containing the extramembraneous catalytic core and F(0) containing the membrane proton channel, linked together by a central stalk and a peripheral stalk. During catalysis, ATP synthesis in the catalytic domain of F(1) is coupled via a rotary mechanism of the central stalk subunits to proton translocation. Its function is as follows. Key component of the F(0) channel; it plays a direct role in translocation across the membrane. A homomeric c-ring of between 10-14 subunits forms the central stalk rotor element with the F(1) delta and epsilon subunits. This is ATP synthase subunit c from Halalkalibacterium halodurans (strain ATCC BAA-125 / DSM 18197 / FERM 7344 / JCM 9153 / C-125) (Bacillus halodurans).